Reading from the N-terminus, the 619-residue chain is Zinc finger and BTB domain-containing protein 7C (619 aa).

A BTB domain is found at 34–101 (CDVLLVVQEQ…AYTSTLTITA (68 aa)). Positions 129 to 218 (PGGDGGEEDD…DSFQAGSPGH (90 aa)) are disordered. Positions 133 to 173 (GGEEDDKEDDDDDEDDDDEEDEEEEEEEEEDDDDDTEDFAD) are enriched in acidic residues. The segment covering 191–208 (KTDHLTEKAYSDTPRDFP) has biased composition (basic and acidic residues). 3 consecutive C2H2-type zinc fingers follow at residues 364 to 386 (QQCP…MRTH), 392 to 414 (YMCT…MRKH), and 420 to 442 (YLCI…MRIH). The C2H2-type 4; degenerate zinc-finger motif lies at 448 to 478 (YQCEFCYKSFTRSDHLHRHIKRQSCRMARPR).

As to expression, detected in normal cervical keratinocytes, and in some cervical carcinoma cell lines.

May be a tumor suppressor gene. The polypeptide is Zinc finger and BTB domain-containing protein 7C (ZBTB7C) (Homo sapiens (Human)).